The sequence spans 107 residues: Integration host factor subunit alpha (107 aa).

This sequence belongs to the bacterial histone-like protein family. As to quaternary structure, heterodimer of an alpha and a beta chain.

Its function is as follows. This protein is one of the two subunits of integration host factor, a specific DNA-binding protein that functions in genetic recombination as well as in transcriptional and translational control. The chain is Integration host factor subunit alpha from Brucella anthropi (strain ATCC 49188 / DSM 6882 / CCUG 24695 / JCM 21032 / LMG 3331 / NBRC 15819 / NCTC 12168 / Alc 37) (Ochrobactrum anthropi).